We begin with the raw amino-acid sequence, 344 residues long: Sorting nexin-16 (344 aa).

Residues 1–10 (MATPYVPVPM) are compositionally biased toward pro residues. Residues 1–72 (MATPYVPVPM…SASSMCGSPL (72 aa)) form a disordered region. Residues 14–26 (NSASSFTNNRNQR) are compositionally biased toward polar residues. Low complexity predominate over residues 27–40 (SSSFGSVSTSSTSS). Residues 52–68 (LKQTNVQDQMDSASSMC) show a composition bias toward polar residues. Residues 105–218 (DRPSTPTILG…EFLCLDDPPG (114 aa)) enclose the PX domain. Residues arginine 144, threonine 146, and arginine 184 each coordinate a 1,2-diacyl-sn-glycero-3-phospho-(1D-myo-inositol-3-phosphate). Serine 222 bears the Phosphoserine mark. The stretch at 223-278 (LEESRAFCETLEETNYHLQRELLEKQKEVESLKKLLGEKQLHIDALETRIRTLSLE) forms a coiled coil.

Belongs to the sorting nexin family. In terms of assembly, homooligomer. Interacts with EGFR.

The protein localises to the early endosome membrane. Its subcellular location is the late endosome membrane. The protein resides in the cytoplasm. It is found in the lysosome. Its function is as follows. May be involved in several stages of intracellular trafficking. Plays a role in protein transport from early to late endosomes. Plays a role in protein transport to the lysosome. Promotes degradation of EGFR after EGF signaling. This is Sorting nexin-16 (Snx16) from Mus musculus (Mouse).